A 236-amino-acid chain; its full sequence is MRKKHFNMILKLALISSLLALAASRTHLTDCLDDHKYCVGLPRGCVGTECNFAFSSISNGTHTEIEIFGNSVIDKTWLAIGYSADKKMEDDFVVFCIRDDAGTNMNKLDQMAGLAYNGKHSNEMTGTIENIKKNKNDKFGLDLEMKEYEKDEQTLYCKMAHRVEPIIDRFNVSKVEILMAKGTWMKGGLSYHGNTRNNTGIIDLSGESKHKRKNSAVGSLALVSSAITFLAAKMLF.

A signal peptide spans 1–24 (MRKKHFNMILKLALISSLLALAAS). N-linked (GlcNAc...) asparagine glycosylation is found at N59, N171, and N197.

Its subcellular location is the secreted. This is an uncharacterized protein from Caenorhabditis elegans.